The chain runs to 37 residues: MSDIN-like toxin proprotein 5 (37 aa).

The propeptide occupies 1–10; it reads MSDINATRLP. The segment at residues 11–20 is a cross-link (cyclopeptide (Leu-Pro)); sequence LFFPPDFRPP. Positions 21-37 are excised as a propeptide; sequence CVGDADNFTLTRGENLC.

Belongs to the MSDIN fungal toxin family. Processed by the macrocyclase-peptidase enzyme POPB to yield a toxic cyclic decapeptide. POPB first removes 10 residues from the N-terminus. Conformational trapping of the remaining peptide forces the enzyme to release this intermediate rather than proceed to macrocyclization. The enzyme rebinds the remaining peptide in a different conformation and catalyzes macrocyclization of the N-terminal 10 residues. In terms of tissue distribution, expressed in basidiocarps.

Functionally, probable toxin that belongs to the MSDIN-like toxin family responsible for a large number of food poisoning cases and deaths. The chain is MSDIN-like toxin proprotein 5 from Amanita exitialis (Guangzhou destroying angel).